We begin with the raw amino-acid sequence, 778 residues long: Endonuclease MutS2 (778 aa).

328–335 (GPNTGGKT) is an ATP binding site. One can recognise a Smr domain in the interval 702 to 777 (LDLRGKRYEE…GSGATIVTFK (76 aa)).

The protein belongs to the DNA mismatch repair MutS family. MutS2 subfamily. Homodimer. Binds to stalled ribosomes, contacting rRNA.

Endonuclease that is involved in the suppression of homologous recombination and thus may have a key role in the control of bacterial genetic diversity. Functionally, acts as a ribosome collision sensor, splitting the ribosome into its 2 subunits. Detects stalled/collided 70S ribosomes which it binds and splits by an ATP-hydrolysis driven conformational change. Acts upstream of the ribosome quality control system (RQC), a ribosome-associated complex that mediates the extraction of incompletely synthesized nascent chains from stalled ribosomes and their subsequent degradation. Probably generates substrates for RQC. This is Endonuclease MutS2 from Streptococcus pneumoniae (strain ATCC 700669 / Spain 23F-1).